Reading from the N-terminus, the 351-residue chain is Prostaglandin reductase 2 (351 aa).

99 to 100 (FY) lines the substrate pocket. NADP(+) contacts are provided by residues 165 to 168 (GACG), Lys192, Tyr208, Asn231, 253 to 259 (CGQISQY), 287 to 289 (FLV), and Asn337. 288 to 290 (LVL) contributes to the substrate binding site.

It belongs to the NADP-dependent oxidoreductase L4BD family. In terms of assembly, monomer.

The protein resides in the cytoplasm. It catalyses the reaction 13,14-dihydro-15-oxo-prostaglandin E2 + NAD(+) = 15-oxoprostaglandin E2 + NADH + H(+). The enzyme catalyses 13,14-dihydro-15-oxo-prostaglandin E2 + NADP(+) = 15-oxoprostaglandin E2 + NADPH + H(+). It carries out the reaction 13,14-dihydro-15-oxo-PGF2alpha + NADP(+) = 15-oxoprostaglandin F2alpha + NADPH + H(+). The catalysed reaction is 13,14-dihydro-15-oxo-prostaglandin E1 + NADP(+) = 15-oxoprostaglandin E1 + NADPH + H(+). It catalyses the reaction 13,14-dihydro-15-oxo-prostaglandin F1alpha + NADP(+) = 15-oxoprostaglandin F1alpha + NADPH + H(+). Functionally, functions as 15-oxo-prostaglandin 13-reductase and acts on 15-keto-PGE1, 15-keto-PGE2, 15-keto-PGE1-alpha and 15-keto-PGE2-alpha with highest activity towards 15-keto-PGE2. Overexpression represses transcriptional activity of PPARG and inhibits adipocyte differentiation. This is Prostaglandin reductase 2 (PTGR2) from Bos taurus (Bovine).